Consider the following 236-residue polypeptide: Leucyl/phenylalanyl-tRNA--protein transferase (236 aa).

It belongs to the L/F-transferase family.

Its subcellular location is the cytoplasm. The enzyme catalyses N-terminal L-lysyl-[protein] + L-leucyl-tRNA(Leu) = N-terminal L-leucyl-L-lysyl-[protein] + tRNA(Leu) + H(+). The catalysed reaction is N-terminal L-arginyl-[protein] + L-leucyl-tRNA(Leu) = N-terminal L-leucyl-L-arginyl-[protein] + tRNA(Leu) + H(+). It catalyses the reaction L-phenylalanyl-tRNA(Phe) + an N-terminal L-alpha-aminoacyl-[protein] = an N-terminal L-phenylalanyl-L-alpha-aminoacyl-[protein] + tRNA(Phe). Its function is as follows. Functions in the N-end rule pathway of protein degradation where it conjugates Leu, Phe and, less efficiently, Met from aminoacyl-tRNAs to the N-termini of proteins containing an N-terminal arginine or lysine. This Yersinia enterocolitica serotype O:8 / biotype 1B (strain NCTC 13174 / 8081) protein is Leucyl/phenylalanyl-tRNA--protein transferase.